A 341-amino-acid chain; its full sequence is MFASRILRNSAQTLKTELPHKETIKMAYDLHKPRSTAIRHLNENPEEPILFLHGIFGSKKSYATDSKLIASSTHTPVYTMDLRNHGETGHAQPFNYETLAQDVKEFCDEHKLDKVKLIGYSLGAKVSMLTALQFPNLVKSAVIIDNAPIPQPQIQLFMKQYIKSMLHVLNESKIRADDKDWKNKASAAMKRFLPNGVIRKNLLVNLVNKPPKDFESPVIDFEDGYIHFLNPIEQMEEMAVKDVTDWPVETTKDLKFEGPVKFIKGLQSPFITDEGMKAIQTHFPNNDFTDVNSNHDILDQRPSEYVKIITDFFNKQRYQSAPDDTILGNKTPTPKQTEVSA.

The N-terminal 40 residues, M1 to H40, are a transit peptide targeting the mitochondrion. The region spanning P48–R301 is the AB hydrolase-1 domain. Catalysis depends on charge relay system residues S121, D145, and H295.

It belongs to the AB hydrolase superfamily.

The protein localises to the mitochondrion. Probable alcohol acetyltransferase that uses acetyl-CoA to synthesize acetate esters from various alcohols. Not involved in the synthesis of ethyl acetate. This is Probable alcohol acetyltransferase (EAT2) from Wickerhamomyces anomalus (strain ATCC 58044 / CBS 1984 / NCYC 433 / NRRL Y-366-8) (Yeast).